The following is a 106-amino-acid chain: Isocitrate dehydrogenase [NAD] subunit gamma, mitochondrial (106 aa).

This sequence belongs to the isocitrate and isopropylmalate dehydrogenases family. Heterooligomer of subunits alpha (IDH3A), beta (IDH3B), and gamma (IDH3G) in the apparent ratio of 2:1:1. The heterodimer containing one IDH3A and one IDH3B subunit and the heterodimer containing one IDH3A and one IDH3G subunit assemble into a heterotetramer (which contains two subunits of IDH3A, one of IDH3B and one of IDH3G) and further into the heterooctamer.

Its subcellular location is the mitochondrion. With respect to regulation, the heterotetramer and the heterodimer composed of IDH3A and IDH3G subunits can be allosterically activated by citrate (CIT) or/and ADP, and the two activators can act independently or synergistically. The heterodimer composed of IDH3A and IDH3B subunits cannot be allosterically regulated and the allosteric regulation of the heterotetramer is through the IDH3G subunit and not the IDH3B subunit. The IDH3G subunit contains the allosteric site which consists of a CIT-binding site and an ADP-binding site, and the binding of CIT and ADP causes conformational changes at the allosteric site which are transmitted to the active site in the catalytic subunit (IDH3A) through a cascade of conformational changes at the heterodimer interface, leading to stabilization of the isocitrate-binding at the active site and thus activation of the enzyme. ATP can activate the heterotetramer and the heterodimer composed of IDH3A and IDH3G subunits at low concentrations but inhibits their activities at high concentrations, whereas ATP exhibits only inhibitory effect on the heterodimer composed of IDH3A and IDH3B subunits. Regulatory subunit which plays a role in the allosteric regulation of the enzyme catalyzing the decarboxylation of isocitrate (ICT) into alpha-ketoglutarate. The heterodimer composed of the alpha (IDH3A) and beta (IDH3B) subunits and the heterodimer composed of the alpha (IDH3A) and gamma (IDH3G) subunits, have considerable basal activity but the full activity of the heterotetramer (containing two subunits of IDH3A, one of IDH3B and one of IDH3G) requires the assembly and cooperative function of both heterodimers. In Sus scrofa (Pig), this protein is Isocitrate dehydrogenase [NAD] subunit gamma, mitochondrial (IDH3G).